The chain runs to 187 residues: Probable chorismate pyruvate-lyase (187 aa).

3 residues coordinate substrate: Arg81, Leu119, and Glu178.

It belongs to the UbiC family.

It is found in the cytoplasm. It catalyses the reaction chorismate = 4-hydroxybenzoate + pyruvate. It functions in the pathway cofactor biosynthesis; ubiquinone biosynthesis. In terms of biological role, removes the pyruvyl group from chorismate, with concomitant aromatization of the ring, to provide 4-hydroxybenzoate (4HB) for the ubiquinone pathway. The polypeptide is Probable chorismate pyruvate-lyase (Thiobacillus denitrificans (strain ATCC 25259 / T1)).